A 304-amino-acid polypeptide reads, in one-letter code: Cell surface-binding protein OPG105 (304 aa).

One can recognise an Alpha-carbonic anhydrase domain in the interval 1–235 (MPQQLSPINI…NDDTQVYYSG (235 aa)). Residues 1–275 (MPQQLSPINI…YQKYIEENKT (275 aa)) lie on the Virion surface side of the membrane. The chain crosses the membrane as a helical span at residues 276–294 (FAIIAIVFVFILTAILFFM). Residues 295–304 (SRRYSREKQN) lie on the Intravirion side of the membrane.

The protein belongs to the alpha-carbonic anhydrase family. Homodimer; disulfide-linked. Post-translationally, apparently non-glycosylated.

It is found in the virion membrane. In terms of biological role, binds to chondroitin sulfate on the cell surface to provide virion attachment to target cell. This Homo sapiens (Human) protein is Cell surface-binding protein OPG105 (OPG105).